Consider the following 357-residue polypeptide: Peptide chain release factor 1 (357 aa).

Gln234 is modified (N5-methylglutamine). The segment covering 284–307 has biased composition (basic and acidic residues); the sequence is KKQEQRSNDRKQQVGSGDRSERIR. A disordered region spans residues 284–313; it reads KKQEQRSNDRKQQVGSGDRSERIRTYNFPQ.

This sequence belongs to the prokaryotic/mitochondrial release factor family. Post-translationally, methylated by PrmC. Methylation increases the termination efficiency of RF1.

Its subcellular location is the cytoplasm. Functionally, peptide chain release factor 1 directs the termination of translation in response to the peptide chain termination codons UAG and UAA. The sequence is that of Peptide chain release factor 1 from Borrelia turicatae (strain 91E135).